The chain runs to 176 residues: dCTP deaminase (176 aa).

Residues 99–104 (RSTLAR) and Asp-115 contribute to the dCTP site. The active-site Proton donor/acceptor is the Glu-125. Residue Gln-163 coordinates dCTP.

This sequence belongs to the dCTP deaminase family. In terms of assembly, homotrimer.

The catalysed reaction is dCTP + H2O + H(+) = dUTP + NH4(+). It participates in pyrimidine metabolism; dUMP biosynthesis; dUMP from dCTP (dUTP route): step 1/2. Its function is as follows. Catalyzes the deamination of dCTP to dUTP. The chain is dCTP deaminase from Pyrobaculum calidifontis (strain DSM 21063 / JCM 11548 / VA1).